An 88-amino-acid chain; its full sequence is Small ribosomal subunit protein bS16c (88 aa).

This sequence belongs to the bacterial ribosomal protein bS16 family.

It is found in the plastid. It localises to the chloroplast. This chain is Small ribosomal subunit protein bS16c, found in Solanum bulbocastanum (Wild potato).